Here is a 159-residue protein sequence, read N- to C-terminus: MHQTHAIQRLEVLPSFSNESPTSRETSESWTNQDDIFYAYASMSPGAEHRGTTQLLRFQLAPIKKLEGSLQTHFLLSSLHPRMTFPGRAGGGEAGSRPPRRPWAGILILQLPSTRGGRRSGHGAVRSWGPWKVVAEQPVGGTDPPAHGGRGRPSPNENT.

Disordered regions lie at residues 1 to 29 (MHQT…TSES) and 114 to 159 (TRGG…NENT). Over residues 15 to 29 (SFSNESPTSRETSES) the composition is skewed to polar residues.

This is an uncharacterized protein from Homo sapiens (Human).